The following is a 468-amino-acid chain: Probable citrate synthase, mitochondrial (468 aa).

Catalysis depends on residues H303, H349, and D404.

The protein belongs to the citrate synthase family. As to quaternary structure, homodimer.

It localises to the mitochondrion matrix. The enzyme catalyses oxaloacetate + acetyl-CoA + H2O = citrate + CoA + H(+). It participates in carbohydrate metabolism; tricarboxylic acid cycle; isocitrate from oxaloacetate: step 1/2. The chain is Probable citrate synthase, mitochondrial (cts-1) from Caenorhabditis briggsae.